We begin with the raw amino-acid sequence, 190 residues long: Potassium-transporting ATPase KdpC subunit (190 aa).

A helical membrane pass occupies residues 13–33; it reads VGFLLLTLVCGVVYPGIVTII.

Belongs to the KdpC family. As to quaternary structure, the system is composed of three essential subunits: KdpA, KdpB and KdpC.

The protein resides in the cell membrane. Part of the high-affinity ATP-driven potassium transport (or Kdp) system, which catalyzes the hydrolysis of ATP coupled with the electrogenic transport of potassium into the cytoplasm. This subunit acts as a catalytic chaperone that increases the ATP-binding affinity of the ATP-hydrolyzing subunit KdpB by the formation of a transient KdpB/KdpC/ATP ternary complex. The polypeptide is Potassium-transporting ATPase KdpC subunit (Listeria welshimeri serovar 6b (strain ATCC 35897 / DSM 20650 / CCUG 15529 / CIP 8149 / NCTC 11857 / SLCC 5334 / V8)).